Reading from the N-terminus, the 468-residue chain is Probable cytosol aminopeptidase (468 aa).

The Mn(2+) site is built by Lys-242 and Asp-247. Lys-254 is an active-site residue. Residues Asp-265, Asp-324, and Glu-326 each contribute to the Mn(2+) site. Residue Arg-328 is part of the active site.

Belongs to the peptidase M17 family. It depends on Mn(2+) as a cofactor.

It is found in the cytoplasm. It catalyses the reaction Release of an N-terminal amino acid, Xaa-|-Yaa-, in which Xaa is preferably Leu, but may be other amino acids including Pro although not Arg or Lys, and Yaa may be Pro. Amino acid amides and methyl esters are also readily hydrolyzed, but rates on arylamides are exceedingly low.. The catalysed reaction is Release of an N-terminal amino acid, preferentially leucine, but not glutamic or aspartic acids.. Presumably involved in the processing and regular turnover of intracellular proteins. Catalyzes the removal of unsubstituted N-terminal amino acids from various peptides. The sequence is that of Probable cytosol aminopeptidase from Neisseria meningitidis serogroup A / serotype 4A (strain DSM 15465 / Z2491).